Here is an 830-residue protein sequence, read N- to C-terminus: Lon protease (830 aa).

One can recognise a Lon N-terminal domain in the interval 20–215; sequence LPAVAIRDVV…LLIKILANEV (196 aa). 367–374 contributes to the ATP binding site; it reads GPPGVGKT. One can recognise a Lon proteolytic domain in the interval 602–781; it reads ENGVGISTGL…DEIVKIAFEK (180 aa). Active-site residues include Ser687 and Lys730. The disordered stretch occupies residues 784-830; it reads PKSSFKKSKTAPKKESAKKAAKSKKPAVKKPAVKKTKQVKKTAKKKK. Basic residues predominate over residues 802–830; that stretch reads KAAKSKKPAVKKPAVKKTKQVKKTAKKKK.

Belongs to the peptidase S16 family. Homohexamer. Organized in a ring with a central cavity.

The protein resides in the cytoplasm. The catalysed reaction is Hydrolysis of proteins in presence of ATP.. In terms of biological role, ATP-dependent serine protease that mediates the selective degradation of mutant and abnormal proteins as well as certain short-lived regulatory proteins. Required for cellular homeostasis and for survival from DNA damage and developmental changes induced by stress. Degrades polypeptides processively to yield small peptide fragments that are 5 to 10 amino acids long. Binds to DNA in a double-stranded, site-specific manner. This chain is Lon protease, found in Elusimicrobium minutum (strain Pei191).